The sequence spans 75 residues: UPF0352 protein VF_1649 (75 aa).

The protein belongs to the UPF0352 family.

The polypeptide is UPF0352 protein VF_1649 (Aliivibrio fischeri (strain ATCC 700601 / ES114) (Vibrio fischeri)).